Here is a 78-residue protein sequence, read N- to C-terminus: Molt-inhibiting hormone (78 aa).

Intrachain disulfides connect Cys-7–Cys-44, Cys-24–Cys-40, and Cys-27–Cys-53.

The protein localises to the secreted. Functionally, inhibits Y-organs where molting hormone (ecdysteroid) is secreted. A molting cycle is initiated when MIH secretion diminishes or stops. Also has significant hyperglycemic hormone (CHH) activity. This chain is Molt-inhibiting hormone, found in Cancer pagurus (Rock crab).